The sequence spans 270 residues: NAD kinase (270 aa).

Residue D49 is the Proton acceptor of the active site. Residues 49 to 50 (DG), R54, 126 to 127 (NE), R152, D154, 165 to 170 (TAYNKS), A189, and Q227 contribute to the NAD(+) site.

This sequence belongs to the NAD kinase family. A divalent metal cation is required as a cofactor.

The protein localises to the cytoplasm. The enzyme catalyses NAD(+) + ATP = ADP + NADP(+) + H(+). In terms of biological role, involved in the regulation of the intracellular balance of NAD and NADP, and is a key enzyme in the biosynthesis of NADP. Catalyzes specifically the phosphorylation on 2'-hydroxyl of the adenosine moiety of NAD to yield NADP. This Lactococcus lactis subsp. cremoris (strain SK11) protein is NAD kinase.